The chain runs to 124 residues: Large ribosomal subunit protein bL12 (124 aa).

It belongs to the bacterial ribosomal protein bL12 family. Homodimer. Part of the ribosomal stalk of the 50S ribosomal subunit. Forms a multimeric L10(L12)X complex, where L10 forms an elongated spine to which 2 to 4 L12 dimers bind in a sequential fashion. Binds GTP-bound translation factors.

In terms of biological role, forms part of the ribosomal stalk which helps the ribosome interact with GTP-bound translation factors. Is thus essential for accurate translation. The chain is Large ribosomal subunit protein bL12 from Nautilia profundicola (strain ATCC BAA-1463 / DSM 18972 / AmH).